The chain runs to 754 residues: ToMV resistance protein Tm-1(GCR237) (754 aa).

Residues 1–201 (MATAQSNSPR…AGMVIGRLES (201 aa)) form an N-terminal inhibitory domain NN region. ATP is bound by residues 18–20 (DTK), T55, R92, and 124–127 (GSGG). Residues 211–431 (KFTVGVTMFG…VDSFLEISPK (221 aa)) are N-terminal inhibitory domain NC.

It belongs to the UPF0261 family. In terms of assembly, homodimer. As to quaternary structure, (Microbial infection) Binds, via an ATP bridge, to the tobamoviruses avirulent (Avr) replication proteins (large and small subunits, e.g. tomato mosaic virus (ToMV/TMV) AC P03587, tobacco mild green mosaic virus (TMGMV) AC P18339 and pepper mild mottle virus (PMMoV) AC P89657) to inhibit their function after the translation of tobamoviruses RNA, but before the viral replication complex formation on the membrane surfaces; this interaction is not possible with resistance-breaking strains replication proteins.

In terms of biological role, inhibitor of viral RNA replication which confers resistance to some tobamoviruses including tomato mosaic virus (ToMV) (e.g. isolate L), tobacco mosaic virus (TMV), tobacco mild green mosaic virus (TMGMV) and pepper mild mottle virus (PMMoV), but not to resistance-breaking isolates of ToMV (e.g. LT1, SL-1 and ToMV1-2) and tomato brown rugose fruit virus (ToBRFV). Prevents tobamoviruses RNA replication by affecting the association of tobamoviruses replication proteins (large and small subunits) with host membrane-associated proteins (e.g. TOM1, TOM2A and ARL8), thus inhibiting the replication complex formation on the membranes and avoiding viral negative-strand RNA synthesis. Inhibits triphosphatase activity of ToMV replication proteins. In Solanum lycopersicum (Tomato), this protein is ToMV resistance protein Tm-1(GCR237).